A 566-amino-acid chain; its full sequence is Protein OBERON 1 (566 aa).

The segment covering 1–10 has biased composition (polar residues); that stretch reads MGTSSGSNLP. The disordered stretch occupies residues 1 to 79; that stretch reads MGTSSGSNLP…KTGPDSHDQH (79 aa). Positions 18–29 are enriched in low complexity; that stretch reads QQLQTSLSLVSS. Polar residues predominate over residues 47-60; sequence ESASSQETWPTSKS. A compositionally biased stretch (basic and acidic residues) spans 64 to 79; that stretch reads RKTDSGKTGPDSHDQH. A PHD-type zinc finger spans residues 225 to 289; that stretch reads LCMCVICNKF…LFKCRACNHT (65 aa). Residues 407-522 are a coiled coil; that stretch reads EEKTRMYKKA…LFEKIKEQES (116 aa). The interval 545-566 is disordered; that stretch reads YNASSPRVDPRSNQRNPFRSNP. Residues 555–566 are compositionally biased toward polar residues; it reads RSNQRNPFRSNP.

As to quaternary structure, self-interacts. Interacts with OBE2, OBE3 and OBE4. Binds to VPg of pea seed borne mosaic virus (PSbMV), turnip mosaic virus (TuMV) and lettuce mosaic virus (LMV), but not with VPg of tobacco etch virus (TEV), cowpea mosaic virus (CPMV), tomato black ring virus (TBRV) and grapevine fan leaf virus (GFLV). Interacts with RBL. As to expression, expressed in roots, seedlings, stems, leaves, flowers and siliques, especially in the vasculature.

The protein localises to the nucleus. Its subcellular location is the nucleoplasm. Functionally, probable transcription factor that acts together with OBE2 for the maintenance and/or establishment of both the shoot and root meristems, probably by controlling the expression of the meristem genes such as WUS, PLT1 and PLT2 and of genes required for auxin responses. Promotes cell meristematic activity via the WUSCHEL-CLAVATA pathway. Involved in the development of the basal pole and in auxin-mediated root and vascular development in the embryo. Confers sensitivity to turnip mosaic virus (TuMV) probably by promoting viral movement and multiplication via interaction with TuMV VPg. The chain is Protein OBERON 1 from Arabidopsis thaliana (Mouse-ear cress).